A 426-amino-acid chain; its full sequence is Tubby protein homolog 1 (426 aa).

The required for localization to cilia in AWB sensory neurons stretch occupies residues 16–28 (QRKMLEDKQKQKR). Positions 19–39 (MLEDKQKQKRHQSAGSVRTTS) are disordered.

The protein belongs to the TUB family. As to quaternary structure, interacts with rgb-3. As to expression, expressed in ciliated sensory neurons.

The protein resides in the cytoplasm. It is found in the cell projection. Its subcellular location is the axon. It localises to the dendrite. The protein localises to the cilium. Functionally, has a role in fat regulation independent of daf-16. Implicated in ciliar sensory function which is required for normal sensory behavior such as chemotaxis. Required for extension and growth of sensory neuronal cilia during postembryonic development, potentially via mediating signaling protein transport and localization of PI(4,5)P2 to the ciliary base. Functions in life span control via the insulin/IGF-1 pathway. Thought to be involved in neuronal trafficking. The protein is Tubby protein homolog 1 of Caenorhabditis elegans.